Reading from the N-terminus, the 123-residue chain is Large ribosomal subunit protein uL14 (123 aa).

This sequence belongs to the universal ribosomal protein uL14 family. As to quaternary structure, part of the 50S ribosomal subunit. Forms a cluster with proteins L3 and L19. In the 70S ribosome, L14 and L19 interact and together make contacts with the 16S rRNA in bridges B5 and B8.

Functionally, binds to 23S rRNA. Forms part of two intersubunit bridges in the 70S ribosome. The sequence is that of Large ribosomal subunit protein uL14 from Sodalis glossinidius (strain morsitans).